The primary structure comprises 106 residues: uncharacterized protein (106 aa).

The helical transmembrane segment at alanine 85–proline 101 threads the bilayer.

Its subcellular location is the membrane. This is an uncharacterized protein from Saccharomyces cerevisiae (strain ATCC 204508 / S288c) (Baker's yeast).